A 114-amino-acid polypeptide reads, in one-letter code: Apokedarcidin (114 aa).

Cystine bridges form between Cys37–Cys47 and Cys88–Cys95.

It belongs to the neocarzinostatin family.

Its function is as follows. Binds non-covalently to an enediyne chromophore which is the cytotoxic and mutagenic component of the antibiotic. The chromophore cleaves duplex DNA site-specifically in a single-stranded manner. The apoprotein cleaves proteins selectively, in particular highly basic histones, with H1 proteins being cleaved the more readily. The polypeptide is Apokedarcidin (Actinomycete sp. (strain L585-6 / ATCC 53650)).